Consider the following 56-residue polypeptide: Protein SspF (56 aa).

The protein belongs to the alpha/beta-type SASP family.

May play some important role in either sporulation or the dormant spore. The polypeptide is Protein SspF (sspF) (Priestia megaterium (strain ATCC 12872 / QMB1551) (Bacillus megaterium)).